The primary structure comprises 346 residues: Biotin synthase (346 aa).

Residues 38 to 256 (RQVQVSTLLS…IAVARIMMPT (219 aa)) form the Radical SAM core domain. 3 residues coordinate [4Fe-4S] cluster: cysteine 53, cysteine 57, and cysteine 60. Positions 97, 128, 188, and 260 each coordinate [2Fe-2S] cluster.

The protein belongs to the radical SAM superfamily. Biotin synthase family. Homodimer. Requires [4Fe-4S] cluster as cofactor. It depends on [2Fe-2S] cluster as a cofactor.

The enzyme catalyses (4R,5S)-dethiobiotin + (sulfur carrier)-SH + 2 reduced [2Fe-2S]-[ferredoxin] + 2 S-adenosyl-L-methionine = (sulfur carrier)-H + biotin + 2 5'-deoxyadenosine + 2 L-methionine + 2 oxidized [2Fe-2S]-[ferredoxin]. It functions in the pathway cofactor biosynthesis; biotin biosynthesis; biotin from 7,8-diaminononanoate: step 2/2. Its function is as follows. Catalyzes the conversion of dethiobiotin (DTB) to biotin by the insertion of a sulfur atom into dethiobiotin via a radical-based mechanism. This Cronobacter sakazakii (strain ATCC BAA-894) (Enterobacter sakazakii) protein is Biotin synthase.